A 353-amino-acid chain; its full sequence is tRNA N6-adenosine threonylcarbamoyltransferase (353 aa).

Residues histidine 115 and histidine 119 each contribute to the Fe cation site. Residues 138–142 (LVSGG), aspartate 171, glycine 184, and asparagine 276 each bind substrate. A Fe cation-binding site is contributed by aspartate 304.

Belongs to the KAE1 / TsaD family. Fe(2+) serves as cofactor.

The protein localises to the cytoplasm. The enzyme catalyses L-threonylcarbamoyladenylate + adenosine(37) in tRNA = N(6)-L-threonylcarbamoyladenosine(37) in tRNA + AMP + H(+). Required for the formation of a threonylcarbamoyl group on adenosine at position 37 (t(6)A37) in tRNAs that read codons beginning with adenine. Is involved in the transfer of the threonylcarbamoyl moiety of threonylcarbamoyl-AMP (TC-AMP) to the N6 group of A37, together with TsaE and TsaB. TsaD likely plays a direct catalytic role in this reaction. The polypeptide is tRNA N6-adenosine threonylcarbamoyltransferase (Xanthomonas euvesicatoria pv. vesicatoria (strain 85-10) (Xanthomonas campestris pv. vesicatoria)).